A 545-amino-acid polypeptide reads, in one-letter code: Esterase-5C (545 aa).

The first 19 residues, 1–19 (MLAARLIILLSFYWLSASA), serve as a signal peptide directing secretion. C84 and C103 are joined by a disulfide. Residue N113 is glycosylated (N-linked (GlcNAc...) asparagine). S207 (acyl-ester intermediate) is an active-site residue. Residues C259 and C271 are joined by a disulfide bond. N421 carries N-linked (GlcNAc...) asparagine glycosylation. H467 serves as the catalytic Charge relay system. The N-linked (GlcNAc...) asparagine glycan is linked to N507. C515 and C536 are disulfide-bonded.

This sequence belongs to the type-B carboxylesterase/lipase family.

The protein localises to the secreted. It catalyses the reaction a carboxylic ester + H2O = an alcohol + a carboxylate + H(+). The polypeptide is Esterase-5C (Est-5C) (Drosophila miranda (Fruit fly)).